Here is a 328-residue protein sequence, read N- to C-terminus: Ribosomal RNA small subunit methyltransferase H (328 aa).

Residues 37 to 39, aspartate 57, phenylalanine 83, aspartate 104, and glutamine 111 each bind S-adenosyl-L-methionine; that span reads GGH.

It belongs to the methyltransferase superfamily. RsmH family.

The protein localises to the cytoplasm. It catalyses the reaction cytidine(1402) in 16S rRNA + S-adenosyl-L-methionine = N(4)-methylcytidine(1402) in 16S rRNA + S-adenosyl-L-homocysteine + H(+). Its function is as follows. Specifically methylates the N4 position of cytidine in position 1402 (C1402) of 16S rRNA. The chain is Ribosomal RNA small subunit methyltransferase H from Neisseria meningitidis serogroup C / serotype 2a (strain ATCC 700532 / DSM 15464 / FAM18).